The primary structure comprises 365 residues: Peptide chain release factor 2 (365 aa).

Q252 carries the N5-methylglutamine modification.

It belongs to the prokaryotic/mitochondrial release factor family. In terms of processing, methylated by PrmC. Methylation increases the termination efficiency of RF2.

The protein localises to the cytoplasm. Peptide chain release factor 2 directs the termination of translation in response to the peptide chain termination codons UGA and UAA. The chain is Peptide chain release factor 2 from Klebsiella pneumoniae (strain 342).